The following is a 192-amino-acid chain: Pyridoxal 5'-phosphate synthase subunit PdxT (192 aa).

47-49 (GES) provides a ligand contact to L-glutamine. Cys-79 serves as the catalytic Nucleophile. Residues Arg-106 and 134-135 (IR) contribute to the L-glutamine site. Residues His-170 and Glu-172 each act as charge relay system in the active site.

The protein belongs to the glutaminase PdxT/SNO family. As to quaternary structure, in the presence of PdxS, forms a dodecamer of heterodimers. Only shows activity in the heterodimer.

It carries out the reaction aldehydo-D-ribose 5-phosphate + D-glyceraldehyde 3-phosphate + L-glutamine = pyridoxal 5'-phosphate + L-glutamate + phosphate + 3 H2O + H(+). It catalyses the reaction L-glutamine + H2O = L-glutamate + NH4(+). It functions in the pathway cofactor biosynthesis; pyridoxal 5'-phosphate biosynthesis. Its function is as follows. Catalyzes the hydrolysis of glutamine to glutamate and ammonia as part of the biosynthesis of pyridoxal 5'-phosphate. The resulting ammonia molecule is channeled to the active site of PdxS. The chain is Pyridoxal 5'-phosphate synthase subunit PdxT from Geobacillus sp. (strain WCH70).